A 286-amino-acid chain; its full sequence is Beta-lactamase SHV-29 (286 aa).

A signal peptide spans 1-21 (MRYIRLCIISLLATLPLAVHA). Serine 66 serves as the catalytic Acyl-ester intermediate. The cysteines at positions 73 and 119 are disulfide-linked. Glutamate 164 functions as the Proton acceptor in the catalytic mechanism. Residue 230-232 (KTG) coordinates substrate.

The protein belongs to the class-A beta-lactamase family.

The enzyme catalyses a beta-lactam + H2O = a substituted beta-amino acid. In Klebsiella pneumoniae, this protein is Beta-lactamase SHV-29 (bla).